Here is a 306-residue protein sequence, read N- to C-terminus: Aspartate carbamoyltransferase catalytic subunit (306 aa).

R55 and T56 together coordinate carbamoyl phosphate. K84 serves as a coordination point for L-aspartate. Carbamoyl phosphate-binding residues include R105, H133, and Q136. The L-aspartate site is built by R166 and R227. Positions 265 and 266 each coordinate carbamoyl phosphate.

The protein belongs to the aspartate/ornithine carbamoyltransferase superfamily. ATCase family. Heterododecamer (2C3:3R2) of six catalytic PyrB chains organized as two trimers (C3), and six regulatory PyrI chains organized as three dimers (R2).

The enzyme catalyses carbamoyl phosphate + L-aspartate = N-carbamoyl-L-aspartate + phosphate + H(+). Its pathway is pyrimidine metabolism; UMP biosynthesis via de novo pathway; (S)-dihydroorotate from bicarbonate: step 2/3. Functionally, catalyzes the condensation of carbamoyl phosphate and aspartate to form carbamoyl aspartate and inorganic phosphate, the committed step in the de novo pyrimidine nucleotide biosynthesis pathway. This chain is Aspartate carbamoyltransferase catalytic subunit, found in Neisseria gonorrhoeae (strain ATCC 700825 / FA 1090).